The primary structure comprises 475 residues: Tesmin (475 aa).

A phosphoserine mark is found at Ser-34 and Ser-67. The 110-residue stretch at 263–372 (SGPALQGPPK…KCIACKNYEE (110 aa)) folds into the CRC domain.

The protein belongs to the lin-54 family.

The protein resides in the cytoplasm. It localises to the nucleus. In terms of biological role, may have a role in spermatogenesis. This is Tesmin from Rattus norvegicus (Rat).